The primary structure comprises 339 residues: Dihydroorotase (339 aa).

Residues histidine 12 and histidine 14 each contribute to the Zn(2+) site. Substrate contacts are provided by residues 14 to 16 and asparagine 40; that span reads HVR. Residues lysine 94, histidine 133, histidine 167, and aspartate 239 each coordinate Zn(2+). The residue at position 94 (lysine 94) is an N6-carboxylysine. Histidine 133 provides a ligand contact to substrate. Residue aspartate 239 is part of the active site. Substrate contacts are provided by histidine 243 and alanine 255.

The protein belongs to the metallo-dependent hydrolases superfamily. DHOase family. Class II DHOase subfamily. As to quaternary structure, homodimer. Requires Zn(2+) as cofactor.

It catalyses the reaction (S)-dihydroorotate + H2O = N-carbamoyl-L-aspartate + H(+). The protein operates within pyrimidine metabolism; UMP biosynthesis via de novo pathway; (S)-dihydroorotate from bicarbonate: step 3/3. Its function is as follows. Catalyzes the reversible cyclization of carbamoyl aspartate to dihydroorotate. This Helicobacter pylori (strain J99 / ATCC 700824) (Campylobacter pylori J99) protein is Dihydroorotase.